Here is a 273-residue protein sequence, read N- to C-terminus: Hemin import ATP-binding protein HmuV (273 aa).

In terms of domain architecture, ABC transporter spans 2–256; sequence LTAHHLDVAR…AHIAQCYGFA (255 aa). An ATP-binding site is contributed by 34–41; sequence GRNGAGKS.

It belongs to the ABC transporter superfamily. Heme (hemin) importer (TC 3.A.1.14.5) family. As to quaternary structure, the complex is composed of two ATP-binding proteins (HmuV), two transmembrane proteins (HmuU) and a solute-binding protein (HmuT).

The protein resides in the cell inner membrane. In terms of biological role, part of the ABC transporter complex HmuTUV involved in hemin import. Responsible for energy coupling to the transport system. In Burkholderia lata (strain ATCC 17760 / DSM 23089 / LMG 22485 / NCIMB 9086 / R18194 / 383), this protein is Hemin import ATP-binding protein HmuV.